Reading from the N-terminus, the 109-residue chain is uncharacterized protein (109 aa).

This is an uncharacterized protein from Escherichia coli (strain K12).